A 354-amino-acid chain; its full sequence is Holliday junction branch migration complex subunit RuvB (354 aa).

The large ATPase domain (RuvB-L) stretch occupies residues 4-198; it reads TTDYGASNTG…FGFTAHLDFY (195 aa). ATP contacts are provided by residues L37, R38, G79, K82, T83, T84, 145–147, R188, Y198, and R235; that span reads EDF. Position 83 (T83) interacts with Mg(2+). The small ATPAse domain (RuvB-S) stretch occupies residues 199 to 269; sequence PHEELEKLIE…DVKEALALYQ (71 aa). Residues 272-354 are head domain (RuvB-H); the sequence is SEGLDRLDIA…TPKDDVSKLF (83 aa). Residues R327 and R332 each contribute to the DNA site.

It belongs to the RuvB family. As to quaternary structure, homohexamer. Forms an RuvA(8)-RuvB(12)-Holliday junction (HJ) complex. HJ DNA is sandwiched between 2 RuvA tetramers; dsDNA enters through RuvA and exits via RuvB. An RuvB hexamer assembles on each DNA strand where it exits the tetramer. Each RuvB hexamer is contacted by two RuvA subunits (via domain III) on 2 adjacent RuvB subunits; this complex drives branch migration. In the full resolvosome a probable DNA-RuvA(4)-RuvB(12)-RuvC(2) complex forms which resolves the HJ.

Its subcellular location is the cytoplasm. It catalyses the reaction ATP + H2O = ADP + phosphate + H(+). In terms of biological role, the RuvA-RuvB-RuvC complex processes Holliday junction (HJ) DNA during genetic recombination and DNA repair, while the RuvA-RuvB complex plays an important role in the rescue of blocked DNA replication forks via replication fork reversal (RFR). RuvA specifically binds to HJ cruciform DNA, conferring on it an open structure. The RuvB hexamer acts as an ATP-dependent pump, pulling dsDNA into and through the RuvAB complex. RuvB forms 2 homohexamers on either side of HJ DNA bound by 1 or 2 RuvA tetramers; 4 subunits per hexamer contact DNA at a time. Coordinated motions by a converter formed by DNA-disengaged RuvB subunits stimulates ATP hydrolysis and nucleotide exchange. Immobilization of the converter enables RuvB to convert the ATP-contained energy into a lever motion, pulling 2 nucleotides of DNA out of the RuvA tetramer per ATP hydrolyzed, thus driving DNA branch migration. The RuvB motors rotate together with the DNA substrate, which together with the progressing nucleotide cycle form the mechanistic basis for DNA recombination by continuous HJ branch migration. Branch migration allows RuvC to scan DNA until it finds its consensus sequence, where it cleaves and resolves cruciform DNA. This is Holliday junction branch migration complex subunit RuvB from Bifidobacterium longum (strain NCC 2705).